A 1275-amino-acid chain; its full sequence is Myosin-1 (1275 aa).

Residues 35-727 (VGVSDLTLLS…TLFAMEDMRD (693 aa)) form the Myosin motor domain. 128–135 (GESGAGKT) serves as a coordination point for ATP. Position 361 is a phosphoserine (Ser-361). The interval 410-493 (TIGILDIYGF…PGLFAALNDS (84 aa)) is actin-binding. IQ domains are found at residues 731 to 751 (HNMA…KEDA) and 752 to 777 (ARLI…YGNG). In terms of domain architecture, TH1 spans 785 to 974 (RRRMSMLGSR…KSGTVSVRPG (190 aa)). Disordered stretches follow at residues 966–1064 (SGTV…LNNN), 1089–1128 (QNHN…AKPK), 1183–1230 (SECP…GGLS), and 1251–1275 (IADA…DDDW). Residues 977–992 (PDSQNPKRPRATSSKV) show a composition bias toward polar residues. A compositionally biased stretch (low complexity) spans 1095–1106 (PTAPSRPAKKAA). Pro residues predominate over residues 1107 to 1121 (PAPPVKKTAPPPPPS). An SH3 domain is found at 1127-1187 (PKWPTFKANY…PTAYISECPP (61 aa)). Over residues 1254–1263 (ALKKRSATRD) the composition is skewed to basic and acidic residues. The segment covering 1264–1275 (SDDEEEDDDDDW) has biased composition (acidic residues).

Belongs to the TRAFAC class myosin-kinesin ATPase superfamily. Myosin family. Phosphorylation of the TEDS site (Ser-361) is required for the polarization of the actin cytoskeleton. Phosphorylation probably activates the myosin-I ATPase activity.

It is found in the cytoplasm. The protein resides in the cytoskeleton. Its subcellular location is the actin patch. In terms of biological role, type-I myosin implicated in the organization of the actin cytoskeleton. Required for proper actin cytoskeleton polarization. At the cell cortex, assembles in patch-like structures together with proteins from the actin-polymerizing machinery and promotes actin assembly. Functions as actin nucleation-promoting factor (NPF) for the Arp2/3 complex. This chain is Myosin-1 (MYO1), found in Meyerozyma guilliermondii (strain ATCC 6260 / CBS 566 / DSM 6381 / JCM 1539 / NBRC 10279 / NRRL Y-324) (Yeast).